Reading from the N-terminus, the 248-residue chain is Probable transcriptional regulatory protein RPE_4771 (248 aa).

The tract at residues 1 to 21 (MAGHSQFKNIMHRKGRQDAQK) is disordered.

Belongs to the TACO1 family.

It localises to the cytoplasm. The sequence is that of Probable transcriptional regulatory protein RPE_4771 from Rhodopseudomonas palustris (strain BisA53).